A 427-amino-acid polypeptide reads, in one-letter code: A-adding tRNA nucleotidyltransferase (427 aa).

Residue Gly-49–Arg-52 participates in ATP binding. Asp-62 and Asp-64 together coordinate Mg(2+). Residues Arg-136–Asp-137, Asn-141, Asp-181–Arg-190, Arg-194, and Arg-225 each bind ATP.

It belongs to the tRNA nucleotidyltransferase/poly(A) polymerase family. Requires Mg(2+) as cofactor.

The catalysed reaction is a tRNA with a 3' CC end + ATP = a tRNA with a 3' CCA end + diphosphate. Functionally, tRNA nucleotidyltransferase involved in the synthesis of the tRNA CCA terminus. Adds the terminal adenosine residue to tRNA. The sequence is that of A-adding tRNA nucleotidyltransferase from Halalkalibacterium halodurans (strain ATCC BAA-125 / DSM 18197 / FERM 7344 / JCM 9153 / C-125) (Bacillus halodurans).